The primary structure comprises 549 residues: Manganese transporter SMF2 (549 aa).

The interval 1-23 (MTSQEYEPIQWSDESQTNNDSVN) is disordered. Residues 12 to 22 (SDESQTNNDSV) show a composition bias toward polar residues. 8 consecutive transmembrane segments (helical) span residues 91 to 109 (LLFS…QYLC), 130 to 147 (FGLN…IIAT), 161 to 185 (ILFH…LLAY), 196 to 214 (IFEA…CFTV), 312 to 332 (LLIS…IVSG), 350 to 372 (IYNL…ALLF), 432 to 452 (ASQV…LYFT), and 521 to 541 (VLAI…LLGF).

Belongs to the NRAMP family.

It localises to the vacuole lumen. It is found in the vesicle. Its subcellular location is the cell membrane. The enzyme catalyses Mn(2+)(in) = Mn(2+)(out). In terms of biological role, high-affinity manganese transporter involved in manganese uptake from the extracellular environment. The sequence is that of Manganese transporter SMF2 (SMF2) from Saccharomyces cerevisiae (strain ATCC 204508 / S288c) (Baker's yeast).